The following is a 310-amino-acid chain: Aspartate carbamoyltransferase catalytic subunit 1 (310 aa).

Carbamoyl phosphate contacts are provided by Arg-55 and Thr-56. Lys-85 is a binding site for L-aspartate. The carbamoyl phosphate site is built by Arg-106, His-134, and Gln-137. L-aspartate-binding residues include Arg-167 and Arg-228. Residues Leu-266 and Pro-267 each contribute to the carbamoyl phosphate site.

It belongs to the aspartate/ornithine carbamoyltransferase superfamily. ATCase family. As to quaternary structure, heterododecamer (2C3:3R2) of six catalytic PyrB chains organized as two trimers (C3), and six regulatory PyrI chains organized as three dimers (R2).

The enzyme catalyses carbamoyl phosphate + L-aspartate = N-carbamoyl-L-aspartate + phosphate + H(+). It functions in the pathway pyrimidine metabolism; UMP biosynthesis via de novo pathway; (S)-dihydroorotate from bicarbonate: step 2/3. In terms of biological role, catalyzes the condensation of carbamoyl phosphate and aspartate to form carbamoyl aspartate and inorganic phosphate, the committed step in the de novo pyrimidine nucleotide biosynthesis pathway. This is Aspartate carbamoyltransferase catalytic subunit 1 from Shewanella halifaxensis (strain HAW-EB4).